Reading from the N-terminus, the 160-residue chain is Tumor suppressor ARF (160 aa).

Residues 1 to 63 form an interaction with CDK5RAP3 and MDM2 region; sequence MGRRFVVTVR…RRGPQPHPGP (63 aa). Disordered regions lie at residues 49 to 74 and 90 to 116; these read PERIARRGPQPHPGPGDDDGQRQSGS and HPLPTGARRSAGGLPRHSGSTAPGRGA.

In terms of assembly, does not interact with cyclins, CDK1, CDK2, CDK4, CDK5 or CDK6. Binds to BCL6, E2F1, HUWE1, MDM2, MYC, NPM1/B23, TOP1/TOPOI and UBE2I/UBC9. Interacts with TBRG1 and COMMD1. Interacts with CDKN2AIP and E4F1. Interacts with CDK5RAP3 and MDM2; form a ternary complex involved in regulation of p53/TP53. Interacts with NOP53; the interaction is direct and promotes ARF nucleoplasmic relocalization and ubiquitin-mediated proteasomal degradation. Interacts with TTF1 (via the N-terminal region (NRD) and a C-terminal region); the interaction is direct and inhibits the nucleolar localization of TTF1. Ubiquitinated in normal cells by TRIP12 via the ubiquitin fusion degradation (UFD) pathway, a process that mediates ubiquitination at the N-terminus, regardless of the absence of lysine residues. Ubiquitination leads to its proteasomal degradation. In cancer cells, however, TRIP12 is located in a different cell compartment, preventing ubiquitination and degradation. Widely expressed with very low levels in kidney and colon.

It is found in the nucleus. Its subcellular location is the nucleolus. The protein localises to the nucleoplasm. Functionally, capable of inducing cell cycle arrest in G1 and G2 phases. Acts as a tumor suppressor. Binds to MDM2 and blocks its nucleocytoplasmic shuttling by sequestering it in the nucleolus. This inhibits the oncogenic action of MDM2 by blocking MDM2-induced degradation of p53 and enhancing p53-dependent transactivation and apoptosis. Also induces G2 arrest and apoptosis in a p53-independent manner by preventing the activation of cyclin B1/CDC2 complexes. Binds to BCL6 and down-regulates BCL6-induced transcriptional repression. Binds to E2F1 and MYC and blocks their transcriptional activator activity but has no effect on MYC transcriptional repression. Binds to TOP1/TOPOI and stimulates its activity. This complex binds to rRNA gene promoters and may play a role in rRNA transcription and/or maturation. Interacts with NPM1/B23 and promotes its polyubiquitination and degradation, thus inhibiting rRNA processing. Plays a role in inhibiting ribosome biogenesis, perhaps by binding to the nucleolar localization sequence of transcription termination factor TTF1, and thereby preventing nucleolar localization of TTF1. Interacts with COMMD1 and promotes its 'Lys63'-linked polyubiquitination. Interacts with UBE2I/UBC9 and enhances sumoylation of a number of its binding partners including MDM2 and E2F1. Binds to HUWE1 and represses its ubiquitin ligase activity. May play a role in controlling cell proliferation and apoptosis during mammary gland development. In Rattus norvegicus (Rat), this protein is Tumor suppressor ARF.